A 358-amino-acid chain; its full sequence is Oxidase FUB9 (358 aa).

One can recognise an FMN hydroxy acid dehydrogenase domain in the interval Ser6–Ala350. Residue Tyr32 coordinates a 2-oxocarboxylate. 3 residues coordinate FMN: Ser114, Gln138, and Thr166. Residue Arg175 participates in a 2-oxocarboxylate binding. Residue Lys221 participates in FMN binding. Residue His245 is the Proton acceptor of the active site. Arg248 serves as a coordination point for a 2-oxocarboxylate. FMN is bound by residues Asp276–Arg280 and Gly299–Arg300.

Belongs to the FMN-dependent alpha-hydroxy acid dehydrogenase family. The cofactor is FMN.

It functions in the pathway mycotoxin biosynthesis. Functionally, oxidase; part of the gene cluster that mediates the biosynthesis of fusaric acid, a mycotoxin with low to moderate toxicity to animals and humans, but with high phytotoxic properties. L-aspartate is suggested as fusaric acid amino acid precursor that is activated and further processed to O-acetyl-L-homoserine by cluster enzymes aspartate kinase FUB3 and homoserine O-acetyltransferase FUB5, as well as enzymes of the primary metabolism. The polyketide synthase (PKS) FUB1 generates the triketide trans-2-hexenal which is presumptively released by the hydrolase FUB4 and linked to the NRPS-bound amino acid precursor by NAD(P)-dependent dehydrogenase FUB6. FUB1, FUB4, and the non-canonical NRPS Fub8 may form an enzyme complex. Further processing of the NRPS-bound intermediate might be carried out by FUB6 and the sulfhydrylase FUB7, enabling a spontaneous electrocyclization to close the carbon backbone of fusaric acid. Dihydrofusaric acid is likely to be released via reduction by the thioester reductase (TR) domain of FUB8 whereupon the final oxidation to fusaric acid may (also) be performed by the FMN-dependent dehydrogenase FUB9. In Gibberella fujikuroi (strain CBS 195.34 / IMI 58289 / NRRL A-6831) (Bakanae and foot rot disease fungus), this protein is Oxidase FUB9.